We begin with the raw amino-acid sequence, 503 residues long: MEKGGNIQLEIPDFSNSVLSHLNQLRMQGRLCDIVVNVQGQAFRAHKVVLAASSPYFRDHMSLNEMSTVSISVIKNPTVFEQLLSFCYTGRICLQLADIISYLTAASFLQMQHIIDKCTQILEGIHFKINVAEVEAELSQTRTKHQERPPESHRVTPNLNRSLSPRHNTPKGNRRGQVSAVLDIRELSPPEESTSPQIIEPSSDVESREPILRINRAGQWYVETGVADRGGRSDDEVRVLGAVHIKTENLEEWLGPENQPSGEDGSSAEEVTAMVIDTTGHGSVGQENYTLGSSGAKVARPTSSEVDRFSPSGSVVPLTERHRARSESPGRMDEPKQPSSQVEESAMMGVSGYVEYLREQEVSERWFRYNPRLTCIYCAKSFNQKGSLDRHMRLHMGITPFVCRMCGKKYTRKDQLEYHIRKHTGNKPFHCHVCGKSFPFQAILNQHFRKNHPGCIPLEGPHSISPETTVTSRGQAEEESPSQEETVAPGEAVQGSVSTTGPD.

The BTB domain maps to 32 to 96 (CDIVVNVQGQ…CYTGRICLQL (65 aa)). Disordered stretches follow at residues 140–206 (QTRT…SDVE) and 280–344 (GHGS…QVEE). The segment covering 144–154 (KHQERPPESHR) has biased composition (basic and acidic residues). Residues 155 to 167 (VTPNLNRSLSPRH) are compositionally biased toward polar residues. Residues 319–336 (TERHRARSESPGRMDEPK) show a composition bias toward basic and acidic residues. 3 consecutive C2H2-type zinc fingers follow at residues 373 to 395 (LTCI…MRLH), 401 to 423 (FVCR…IRKH), and 429 to 452 (FHCH…RKNH). The disordered stretch occupies residues 457 to 503 (PLEGPHSISPETTVTSRGQAEEESPSQEETVAPGEAVQGSVSTTGPD). A compositionally biased stretch (polar residues) spans 465-474 (SPETTVTSRG).

The protein localises to the nucleus. Its function is as follows. May be involved in transcriptional regulation. In Homo sapiens (Human), this protein is Zinc finger and BTB domain-containing protein 37 (ZBTB37).